Here is a 195-residue protein sequence, read N- to C-terminus: Neurensin-1 (195 aa).

The next 2 membrane-spanning stretches (helical) occupy residues 66-86 and 120-140; these read LISG…GFLV and AVLF…SVFV.

The protein belongs to the VMP family. Expressed in brain. Not detectable in other tissues tested.

It is found in the membrane. The protein localises to the cell projection. Its subcellular location is the neuron projection. Its function is as follows. May play an important role in neural organelle transport, and in transduction of nerve signals or in nerve growth. May play a role in neurite extension. May play a role in memory consolidation. The chain is Neurensin-1 from Homo sapiens (Human).